We begin with the raw amino-acid sequence, 227 residues long: Small ribosomal subunit protein uS3 (227 aa).

In terms of domain architecture, KH type-2 spans 24–94 (LDEYLEEELG…RVSIEVKELP (71 aa)). The interval 207-227 (EEVEDELKELIGKSEDEAEGA) is disordered.

Belongs to the universal ribosomal protein uS3 family. In terms of assembly, part of the 30S ribosomal subunit.

In terms of biological role, binds the lower part of the 30S subunit head. In Methanopyrus kandleri (strain AV19 / DSM 6324 / JCM 9639 / NBRC 100938), this protein is Small ribosomal subunit protein uS3.